A 279-amino-acid chain; its full sequence is Putative pyruvate, phosphate dikinase regulatory protein (279 aa).

Glycine 154–threonine 161 is a binding site for ADP.

Belongs to the pyruvate, phosphate/water dikinase regulatory protein family. PDRP subfamily.

It carries out the reaction N(tele)-phospho-L-histidyl/L-threonyl-[pyruvate, phosphate dikinase] + ADP = N(tele)-phospho-L-histidyl/O-phospho-L-threonyl-[pyruvate, phosphate dikinase] + AMP + H(+). The catalysed reaction is N(tele)-phospho-L-histidyl/O-phospho-L-threonyl-[pyruvate, phosphate dikinase] + phosphate + H(+) = N(tele)-phospho-L-histidyl/L-threonyl-[pyruvate, phosphate dikinase] + diphosphate. Functionally, bifunctional serine/threonine kinase and phosphorylase involved in the regulation of the pyruvate, phosphate dikinase (PPDK) by catalyzing its phosphorylation/dephosphorylation. This chain is Putative pyruvate, phosphate dikinase regulatory protein, found in Rhodopseudomonas palustris (strain BisB18).